Here is a 418-residue protein sequence, read N- to C-terminus: uncharacterized protein (418 aa).

4 disordered regions span residues 123–174, 209–231, 258–302, and 344–418; these read KVKD…DSDK, FDKE…EKEE, KDDN…DEEL, and KDAD…YFKK. Over residues 136 to 154 the composition is skewed to basic and acidic residues; it reads NKKDKKDKNKQNEEDHLII. Positions 156–170 are enriched in acidic residues; it reads DVIDEEIQEKEDNES. Over residues 209 to 227 the composition is skewed to basic and acidic residues; it reads FDKEEKEREKEKEKEKEKE. The segment covering 266–293 has biased composition (low complexity); that stretch reads NQNQNQNQNNNNNNNNNNNNNNNNNNNN. The span at 344-356 shows a compositional bias: acidic residues; the sequence is KDADDSDDFDEFN. Polar residues predominate over residues 359–374; the sequence is DTESQLSKSKQKSPNV. Positions 375–390 are enriched in low complexity; the sequence is KKTTTTTTTSTSTSSR. A compositionally biased stretch (basic residues) spans 391-401; sequence KQSKSKLKPKS.

This is an uncharacterized protein from Dictyostelium discoideum (Social amoeba).